A 467-amino-acid polypeptide reads, in one-letter code: UPF0236 protein TTE0033/TTE0744/TTE0838/TTE0852/TTE1082/TTE1247/TTE1519/TTE1678/TTE1739/TTE1823/TTE2212 (467 aa).

This sequence belongs to the UPF0236 family.

This Caldanaerobacter subterraneus subsp. tengcongensis (strain DSM 15242 / JCM 11007 / NBRC 100824 / MB4) (Thermoanaerobacter tengcongensis) protein is UPF0236 protein TTE0033/TTE0744/TTE0838/TTE0852/TTE1082/TTE1247/TTE1519/TTE1678/TTE1739/TTE1823/TTE2212.